A 436-amino-acid chain; its full sequence is [Pyruvate dehydrogenase (acetyl-transferring)] kinase isozyme 1, mitochondrial (436 aa).

A mitochondrion-targeting transit peptide spans 1 to 28 (MRLARLLRGAALAGPGPGLRAAGFSRSF). Phosphotyrosine; by FGFR1 is present on tyrosine 136. A Histidine kinase domain is found at 163–393 (YKESFGVDPV…DAVIYIKALS (231 aa)). Tyrosine 243 is subject to Phosphotyrosine; by FGFR1, ABL1, FLT3 and JAK2. Tyrosine 244 is modified (phosphotyrosine; by FGFR1). Residues 279–286 (ELFKNAMR), aspartate 318, 337–338 (ST), and 354–359 (GFGYGL) contribute to the ATP site. Threonine 338 is modified (phosphothreonine). Position 405 is an N6-succinyllysine (lysine 405).

The protein belongs to the PDK/BCKDK protein kinase family. Homodimer, and heterodimer with PDK2. Interacts with the pyruvate dehydrogenase complex subunit DLAT, and is part of the multimeric pyruvate dehydrogenase complex that contains multiple copies of pyruvate dehydrogenase (E1), dihydrolipoamide acetyltransferase (DLAT, E2) and lipoamide dehydrogenase (DLD, E3). Interacts with phosphoglycerate kinase PGK1; the interaction is direct, occurs under hypoxic conditions and leads to PDK1-mediated inhibition of pyruvate dehydrogenase complex activity. Post-translationally, phosphorylated by constitutively activated ABL1, FGFR1, FLT3 and JAK2 (in vitro), and this may also occur in cancer cells that express constitutively activated ABL1, FGFR1, FLT3 and JAK2. Phosphorylation at Tyr-243 and Tyr-244 strongly increases kinase activity, while phosphorylation at Tyr-136 has a lesser effect. Phosphorylated under hypoxic conditions at Thr-338 by phosphoglycerate kinase PGK1 which has an activating effect. As to expression, expressed predominantly in the heart. Detected at lower levels in liver, skeletal muscle and pancreas.

Its subcellular location is the mitochondrion matrix. It catalyses the reaction L-seryl-[pyruvate dehydrogenase E1 alpha subunit] + ATP = O-phospho-L-seryl-[pyruvate dehydrogenase E1 alpha subunit] + ADP + H(+). Its activity is regulated as follows. Activity is enhanced by binding to the pyruvate dehydrogenase subunit DLAT. Inhibited by AZD7545; this compound interferes with DLAT binding and thereby inhibits kinase activity. Inhibited by dichloroacetate and radicicol. Activated under hypoxic conditions by phosphoglycerate kinase PGK1-mediated phosphorylation at Thr-338. Kinase that plays a key role in regulation of glucose and fatty acid metabolism and homeostasis via phosphorylation of the pyruvate dehydrogenase subunits PDHA1 and PDHA2. This inhibits pyruvate dehydrogenase activity, and thereby regulates metabolite flux through the tricarboxylic acid cycle, down-regulates aerobic respiration and inhibits the formation of acetyl-coenzyme A from pyruvate. Plays an important role in cellular responses to hypoxia and is important for cell proliferation under hypoxia. This chain is [Pyruvate dehydrogenase (acetyl-transferring)] kinase isozyme 1, mitochondrial (PDK1), found in Homo sapiens (Human).